The following is a 237-amino-acid chain: Leucyl/phenylalanyl-tRNA--protein transferase (237 aa).

The protein belongs to the L/F-transferase family.

The protein localises to the cytoplasm. The enzyme catalyses N-terminal L-lysyl-[protein] + L-leucyl-tRNA(Leu) = N-terminal L-leucyl-L-lysyl-[protein] + tRNA(Leu) + H(+). It catalyses the reaction N-terminal L-arginyl-[protein] + L-leucyl-tRNA(Leu) = N-terminal L-leucyl-L-arginyl-[protein] + tRNA(Leu) + H(+). The catalysed reaction is L-phenylalanyl-tRNA(Phe) + an N-terminal L-alpha-aminoacyl-[protein] = an N-terminal L-phenylalanyl-L-alpha-aminoacyl-[protein] + tRNA(Phe). In terms of biological role, functions in the N-end rule pathway of protein degradation where it conjugates Leu, Phe and, less efficiently, Met from aminoacyl-tRNAs to the N-termini of proteins containing an N-terminal arginine or lysine. The polypeptide is Leucyl/phenylalanyl-tRNA--protein transferase (Shewanella baltica (strain OS155 / ATCC BAA-1091)).